The following is a 110-amino-acid chain: uncharacterized protein (110 aa).

Belongs to the HesB/IscA family.

This is an uncharacterized protein from Rickettsia prowazekii (strain Madrid E).